Reading from the N-terminus, the 227-residue chain is Probable minor pilin MMP0600 (227 aa).

Positions 1-7 (MAKFSKG) are excised as a propeptide. Residues 8 to 16 (QISIELILL) carry the QXSXEXXXL motif.

In terms of processing, the N-terminus is probably cleaved by the prepilin peptidase EppA, which recognizes the class III signal sequence.

The protein resides in the secreted. It localises to the cell surface. Its subcellular location is the fimbrium. The sequence is that of Probable minor pilin MMP0600 from Methanococcus maripaludis (strain DSM 14266 / JCM 13030 / NBRC 101832 / S2 / LL).